Consider the following 83-residue polypeptide: Small ribosomal subunit protein bS16 (83 aa).

It belongs to the bacterial ribosomal protein bS16 family.

The chain is Small ribosomal subunit protein bS16 from Pseudomonas aeruginosa (strain LESB58).